We begin with the raw amino-acid sequence, 227 residues long: Glutathione S-transferase U13 (227 aa).

One can recognise a GST N-terminal domain in the interval 5–86; sequence DTVKLIGSWS…YVDEAWPSVP (82 aa). Glutathione-binding positions include 15–16, 43–44, 57–58, and 70–71; these read SP, EK, KV, and ES. A GST C-terminal domain is found at 92–224; that stretch reads DAYDRASARF…EVVAFAKQKF (133 aa). Thr-158 bears the Phosphothreonine mark.

Belongs to the GST superfamily. Tau family.

It is found in the cytoplasm. The protein resides in the cytosol. It catalyses the reaction RX + glutathione = an S-substituted glutathione + a halide anion + H(+). In terms of biological role, in vitro, possesses glutathione S-transferase activity toward 1-chloro-2,4-dinitrobenzene (CDNB) and benzyl isothiocyanate (BITC). May be involved in the conjugation of reduced glutathione to a wide number of exogenous and endogenous hydrophobic electrophiles and have a detoxification role against certain herbicides. The polypeptide is Glutathione S-transferase U13 (GSTU13) (Arabidopsis thaliana (Mouse-ear cress)).